Consider the following 221-residue polypeptide: Late embryogenesis abundant protein, group 3 (221 aa).

The disordered stretch occupies residues 1 to 221 (MASHQDKASY…KDSSTITRDH (221 aa)). Over residues 33-42 (TAQHAKDRAA) the composition is skewed to basic and acidic residues. The segment covering 43–52 (DAAGHAAGKG) has biased composition (low complexity). 2 stretches are compositionally biased toward basic and acidic residues: residues 53–63 (QDAKEATKQKA) and 72–147 (KKTD…KQKA). The segment covering 212–221 (KDSSTITRDH) has biased composition (polar residues).

It belongs to the LEA type 4 family.

This Zea mays (Maize) protein is Late embryogenesis abundant protein, group 3 (MGL3).